We begin with the raw amino-acid sequence, 5400 residues long: Midasin (5400 aa).

6 AAA-ATPase protomer regions span residues 345–571, 656–986, 1050–1308, 1347–1652, 1769–2023, and 2074–2347; these read MVSL…HGLP, LLEK…AIKA, SYVK…EKVV, SMRR…VNMA, VLRV…VLRI, and IRQN…MMGP. ATP contacts are provided by residues 360–367, 674–681, 1079–1086, 1369–1376, 1786–1793, and 2095–2102; these read GPSGSGKS, GETGTGKT, GPTSSGKT, GDTGGGKT, GSPGVGKT, and GPSSSGKT. The linker stretch occupies residues 2435 to 4569; it reads IYLSSLGVTD…DGVGAKDVSD (2135 aa). Coiled-coil stretches lie at residues 2896-2916, 3233-3253, and 3896-3916; these read LERLKLEKKRLEDKMGFSEID, AMKITCKLLKLEEKISSLELN, and MEQLDLNRKNVETELKEVLKL. Disordered regions lie at residues 4540–4890, 4905–4929, and 4990–5069; these read EEDD…SSSN, TLTDNLPKMEFPQNQSSTAQQTKVN, and QVNT…RMDS. Residues 4576–4612 show a composition bias toward basic and acidic residues; the sequence is QLHGTDKKEEEEKEQDDVLGKNKGIEMSDEFDGKEYS. Positions 4613-4631 are enriched in acidic residues; the sequence is VSEDEEEDKEDEGSEDEPL. 2 stretches are compositionally biased toward basic and acidic residues: residues 4641–4652 and 4661–4687; these read DAEKADEKPWNK and MNEKNESGPSIVDKDTRSRELRAKDDG. Composition is skewed to acidic residues over residues 4688-4698 and 4706-4721; these read VETADEPEESN and GNDENVEQDDFDDTDN. The span at 4722-4732 shows a compositional bias: basic and acidic residues; sequence LEEKIQTKEEA. The segment covering 4740 to 4750 has biased composition (acidic residues); that stretch reads VDNEQIDDDME. Residues 4751 to 4762 show a composition bias toward basic and acidic residues; sequence MDKTEEVEKEDA. Acidic residues predominate over residues 4779-4798; that stretch reads GENDQEETQEPSEENMEAEA. Over residues 4799 to 4810 the composition is skewed to basic and acidic residues; the sequence is EDRCGSPQKEEP. A compositionally biased stretch (acidic residues) spans 4811–4822; it reads GNDLEQEPETEP. The segment covering 4823-4834 has biased composition (basic and acidic residues); that stretch reads IEGKEVMSEDMM. Composition is skewed to polar residues over residues 4839–4855, 4864–4874, 4916–4928, and 5030–5040; these read RNDNISGVESGSQNPHG, TAPQENLSATD, PQNQSSTAQQTKV, and SKPSISNSIAE. The short motif at 5157 to 5164 is the Nuclear localization signal element; it reads MKKVIPYI. In terms of domain architecture, VWFA spans 5186-5387; it reads QVVIAVDDSR…EALPRTLGDV (202 aa). A coiled-coil region spans residues 5271-5291; the sequence is VVNLLRNMNEMLENLASTRRQ.

The protein belongs to the midasin family. In terms of assembly, associates with pre-60S ribosomes in the nucleoplasm. As to expression, constitutively and ubiquitously expressed. Mostly observed in the shoot apex and root tip, and, to a lower extent, in mature seeds, seedling (excluding the hypocotyl), roots, stems, leaves and flowers.

Its subcellular location is the nucleus. It localises to the nucleolus. The protein resides in the nucleoplasm. Nuclear chaperone required for maturation and nuclear export of pre-60S ribosome subunits. Functions at successive maturation steps to remove ribosomal factors at critical transition points, first driving the exit of early pre-60S particles from the nucleolus and then driving late pre-60S particles from the nucleus. Required for female gametophyte development. Involved in the expression regulation of genes related to plant growth and development. The protein is Midasin of Arabidopsis thaliana (Mouse-ear cress).